A 127-amino-acid polypeptide reads, in one-letter code: MFAFRSIATTVVMVAASLASASAFAHPKLVVSSPVDNATVSAPATINLSFTEKLLPSLSGAELTMTKMPGMEMPPMKVAAKAAPSADGKSLIVTPDKPLSTGTYRLHWRVVSNDTHPVKGSISFSVK.

Residues 1–25 (MFAFRSIATTVVMVAASLASASAFA) form the signal peptide. Cu cation contacts are provided by His26, Met65, Met68, Met71, Met76, and His116.

The protein belongs to the CopC family.

Its subcellular location is the periplasm. Its function is as follows. Copper-binding protein involved in copper resistance. In Xanthomonas campestris pv. juglandis (Xanthomonas arboricola pv. juglandis), this protein is Copper resistance protein C.